Reading from the N-terminus, the 113-residue chain is U11-theraphotoxin-Hhn1a (113 aa).

The first 21 residues, 1-21 (MNTVRVTFLLVFVLAVSLGQA), serve as a signal peptide directing secretion. Positions 22 to 74 (DKDENRMEMQEKTEQGKSYLDFAENLLLQKLEELEAKLLEEDSEESRNSRQRR) are excised as a propeptide. The disordered stretch occupies residues 61–83 (EEDSEESRNSRQRRCIGEGVPCD). Intrachain disulfides connect cysteine 75-cysteine 90, cysteine 82-cysteine 95, and cysteine 89-cysteine 110.

The protein belongs to the neurotoxin 14 (magi-1) family. 01 (HNTX-16) subfamily. As to expression, expressed by the venom gland.

The protein resides in the secreted. Its function is as follows. Probable ion channel inhibitor. In Cyriopagopus hainanus (Chinese bird spider), this protein is U11-theraphotoxin-Hhn1a.